Consider the following 252-residue polypeptide: Trans-aconitate 2-methyltransferase (252 aa).

This sequence belongs to the methyltransferase superfamily. Tam family.

It localises to the cytoplasm. The enzyme catalyses trans-aconitate + S-adenosyl-L-methionine = (E)-3-(methoxycarbonyl)pent-2-enedioate + S-adenosyl-L-homocysteine. Functionally, catalyzes the S-adenosylmethionine monomethyl esterification of trans-aconitate. The polypeptide is Trans-aconitate 2-methyltransferase (Escherichia coli O6:H1 (strain CFT073 / ATCC 700928 / UPEC)).